An 806-amino-acid polypeptide reads, in one-letter code: Glycerol-3-phosphate acyltransferase (806 aa).

An HXXXXD motif motif is present at residues 305–310; the sequence is CHRSHM.

It belongs to the GPAT/DAPAT family.

It localises to the cell inner membrane. It carries out the reaction sn-glycerol 3-phosphate + an acyl-CoA = a 1-acyl-sn-glycero-3-phosphate + CoA. The protein operates within phospholipid metabolism; CDP-diacylglycerol biosynthesis; CDP-diacylglycerol from sn-glycerol 3-phosphate: step 1/3. The polypeptide is Glycerol-3-phosphate acyltransferase (Salmonella arizonae (strain ATCC BAA-731 / CDC346-86 / RSK2980)).